The following is a 283-amino-acid chain: Shikimate dehydrogenase (NADP(+)) (283 aa).

Shikimate contacts are provided by residues 19 to 21 (SRS) and Thr66. Lys70 (proton acceptor) is an active-site residue. Glu82 provides a ligand contact to NADP(+). Asn91 and Asp107 together coordinate shikimate. Residues 133-137 (GAGGA) and Ile226 each bind NADP(+). Shikimate is bound at residue Tyr228. Gly249 serves as a coordination point for NADP(+).

This sequence belongs to the shikimate dehydrogenase family. Homodimer.

It catalyses the reaction shikimate + NADP(+) = 3-dehydroshikimate + NADPH + H(+). It participates in metabolic intermediate biosynthesis; chorismate biosynthesis; chorismate from D-erythrose 4-phosphate and phosphoenolpyruvate: step 4/7. In terms of biological role, involved in the biosynthesis of the chorismate, which leads to the biosynthesis of aromatic amino acids. Catalyzes the reversible NADPH linked reduction of 3-dehydroshikimate (DHSA) to yield shikimate (SA). The chain is Shikimate dehydrogenase (NADP(+)) from Rhodospirillum rubrum (strain ATCC 11170 / ATH 1.1.1 / DSM 467 / LMG 4362 / NCIMB 8255 / S1).